Consider the following 388-residue polypeptide: MRYFTAGESHGPRLTAIIEGVPAGLSLSAEDINIELKRRQGGYGRGGRMKIESDQVEITSGVRHGKTIGSPITLNVTNRDFKNWEQIMAAQDVEDKIKKQRRLTKPRPGHADLVGGMKYEFEDLRNVLERSSARETTMRVAVGAVAKKLLHELEIEVANHVVNFGRREISSPEHLSVQEIRETAGRSDLSIFDESQAEDLRTYIDQIKKAGDTIGGIIETRVEGVPAGLGSYVQYDRKLDAKIAGAVVSINAFKGVEFGLGFEAGKRPGSQVMDEIIWSENKGYTRSSNQLGGFEGGMTNGEQLIVRGVMKPIPTLYKPLMSIDTESHEPYKASVERSDPTALPAAGVVMENVVATVVAQEICDKFNSDTINELKKALVDYKKRLSEY.

NADP(+) is bound by residues arginine 39 and arginine 45. FMN contacts are provided by residues 130 to 132 (RSS), 251 to 252 (NA), glycine 296, 311 to 315 (KPIPT), and arginine 337.

Belongs to the chorismate synthase family. In terms of assembly, homotetramer. Requires FMNH2 as cofactor.

The enzyme catalyses 5-O-(1-carboxyvinyl)-3-phosphoshikimate = chorismate + phosphate. It functions in the pathway metabolic intermediate biosynthesis; chorismate biosynthesis; chorismate from D-erythrose 4-phosphate and phosphoenolpyruvate: step 7/7. Functionally, catalyzes the anti-1,4-elimination of the C-3 phosphate and the C-6 proR hydrogen from 5-enolpyruvylshikimate-3-phosphate (EPSP) to yield chorismate, which is the branch point compound that serves as the starting substrate for the three terminal pathways of aromatic amino acid biosynthesis. This reaction introduces a second double bond into the aromatic ring system. This chain is Chorismate synthase, found in Lactococcus lactis subsp. cremoris (strain SK11).